The chain runs to 285 residues: MNSLNKTGLLYIVPTPIGNLSDITYRAVETLKNVNLIAAENIHHTNILLQHYNVKNILISLNKNNEKKQSDYVINELKKGKKIALVSDAGTPVINDPGYFLVKKCCFLNIKIIPLPGPCAAITALSASGISTNRFCYEGFLPSKKKIRRDLLKSLKKEIRTIIFYESKHRILESIKDIIETIDENRYLVIAREITKKWEYIYGAKANIILSWLKEDQSRYKKGEIVIIIDGFKELKNKDISAKAINTLTILRNFLSLKQSVFITSKIHKIKKNDLYQHAIKEKDK.

This sequence belongs to the methyltransferase superfamily. RsmI family.

It is found in the cytoplasm. The catalysed reaction is cytidine(1402) in 16S rRNA + S-adenosyl-L-methionine = 2'-O-methylcytidine(1402) in 16S rRNA + S-adenosyl-L-homocysteine + H(+). Its function is as follows. Catalyzes the 2'-O-methylation of the ribose of cytidine 1402 (C1402) in 16S rRNA. The chain is Ribosomal RNA small subunit methyltransferase I from Buchnera aphidicola subsp. Schizaphis graminum (strain Sg).